The primary structure comprises 126 residues: Aspartate 1-decarboxylase (126 aa).

Ser-25 functions as the Schiff-base intermediate with substrate; via pyruvic acid in the catalytic mechanism. Ser-25 carries the pyruvic acid (Ser) modification. A substrate-binding site is contributed by Thr-57. Residue Tyr-58 is the Proton donor of the active site. Gly-73–Ala-75 contributes to the substrate binding site.

Belongs to the PanD family. Heterooctamer of four alpha and four beta subunits. Pyruvate serves as cofactor. Post-translationally, is synthesized initially as an inactive proenzyme, which is activated by self-cleavage at a specific serine bond to produce a beta-subunit with a hydroxyl group at its C-terminus and an alpha-subunit with a pyruvoyl group at its N-terminus.

The protein resides in the cytoplasm. The enzyme catalyses L-aspartate + H(+) = beta-alanine + CO2. The protein operates within cofactor biosynthesis; (R)-pantothenate biosynthesis; beta-alanine from L-aspartate: step 1/1. Catalyzes the pyruvoyl-dependent decarboxylation of aspartate to produce beta-alanine. The protein is Aspartate 1-decarboxylase of Xanthomonas oryzae pv. oryzae (strain MAFF 311018).